We begin with the raw amino-acid sequence, 77 residues long: Large ribosomal subunit protein bL28 (77 aa).

The disordered stretch occupies residues 1–20; it reads MSRVCQVTGKGPVTGNNISH.

Belongs to the bacterial ribosomal protein bL28 family.

The sequence is that of Large ribosomal subunit protein bL28 from Pseudomonas syringae pv. tomato (strain ATCC BAA-871 / DC3000).